We begin with the raw amino-acid sequence, 517 residues long: Ribose import ATP-binding protein RbsA (517 aa).

2 ABC transporter domains span residues 11–251 (LEMR…VGRD) and 263–507 (YDPG…ALAT). 43-50 (GENGAGKS) is a binding site for ATP.

It belongs to the ABC transporter superfamily. Ribose importer (TC 3.A.1.2.1) family. The complex is composed of an ATP-binding protein (RbsA), two transmembrane proteins (RbsC) and a solute-binding protein (RbsB).

The protein resides in the cell inner membrane. The catalysed reaction is D-ribose(out) + ATP + H2O = D-ribose(in) + ADP + phosphate + H(+). Part of the ABC transporter complex RbsABC involved in ribose import. Responsible for energy coupling to the transport system. In Burkholderia pseudomallei (strain K96243), this protein is Ribose import ATP-binding protein RbsA.